The primary structure comprises 416 residues: UDP-N-acetylmuramoylalanine--D-glutamate ligase (416 aa).

108-114 (GTTGKTT) provides a ligand contact to ATP.

It belongs to the MurCDEF family.

It localises to the cytoplasm. It carries out the reaction UDP-N-acetyl-alpha-D-muramoyl-L-alanine + D-glutamate + ATP = UDP-N-acetyl-alpha-D-muramoyl-L-alanyl-D-glutamate + ADP + phosphate + H(+). The protein operates within cell wall biogenesis; peptidoglycan biosynthesis. Cell wall formation. Catalyzes the addition of glutamate to the nucleotide precursor UDP-N-acetylmuramoyl-L-alanine (UMA). The protein is UDP-N-acetylmuramoylalanine--D-glutamate ligase of Chlamydia trachomatis serovar L2 (strain ATCC VR-902B / DSM 19102 / 434/Bu).